Reading from the N-terminus, the 140-residue chain is Large ribosomal subunit protein uL16 (140 aa).

The protein belongs to the universal ribosomal protein uL16 family. Part of the 50S ribosomal subunit.

Functionally, binds 23S rRNA and is also seen to make contacts with the A and possibly P site tRNAs. This Onion yellows phytoplasma (strain OY-M) protein is Large ribosomal subunit protein uL16.